Consider the following 293-residue polypeptide: Bifunctional protein FolD (293 aa).

NADP(+) contacts are provided by residues 164–166 (GRS), Ser193, and Thr234.

The protein belongs to the tetrahydrofolate dehydrogenase/cyclohydrolase family. Homodimer.

It carries out the reaction (6R)-5,10-methylene-5,6,7,8-tetrahydrofolate + NADP(+) = (6R)-5,10-methenyltetrahydrofolate + NADPH. The catalysed reaction is (6R)-5,10-methenyltetrahydrofolate + H2O = (6R)-10-formyltetrahydrofolate + H(+). It functions in the pathway one-carbon metabolism; tetrahydrofolate interconversion. Catalyzes the oxidation of 5,10-methylenetetrahydrofolate to 5,10-methenyltetrahydrofolate and then the hydrolysis of 5,10-methenyltetrahydrofolate to 10-formyltetrahydrofolate. The protein is Bifunctional protein FolD of Bacteroides fragilis (strain ATCC 25285 / DSM 2151 / CCUG 4856 / JCM 11019 / LMG 10263 / NCTC 9343 / Onslow / VPI 2553 / EN-2).